Reading from the N-terminus, the 373-residue chain is Alpha-N-acetylgalactosaminide alpha-2,6-sialyltransferase 2 (373 aa).

The Cytoplasmic portion of the chain corresponds to 1–6 (MDLPRR). The chain crosses the membrane as a helical; Signal-anchor for type II membrane protein span at residues 7 to 27 (WLFRMLLLVATSSGILLMLYS). Residues 28–373 (SAGQQSPETQ…NAGILWLYQR (346 aa)) are Lumenal-facing. 2 cysteine pairs are disulfide-bonded: C65–C147 and C150–C316. N-linked (GlcNAc...) asparagine glycosylation is present at N103. N155 contacts CMP-N-acetyl-beta-neuraminate. N160 carries an N-linked (GlcNAc...) asparagine glycan. CMP-N-acetyl-beta-neuraminate is bound by residues N178, S303, and H335.

The protein belongs to the glycosyltransferase 29 family. Highly expressed in lactating mammary gland and adult testis. Lower levels in kidney.

The protein localises to the golgi apparatus membrane. It carries out the reaction a beta-D-galactosyl-(1-&gt;3)-N-acetyl-alpha-D-galactosaminyl derivative + CMP-N-acetyl-beta-neuraminate = a beta-D-galactosyl-(1-&gt;3)-[N-acetyl-alpha-neuraminyl-(2-&gt;6)]-N-acetyl-alpha-D-galactosaminyl derivative + CMP + H(+). The catalysed reaction is a 3-O-[N-acetyl-alpha-D-galactosaminyl]-L-threonyl-[protein] + CMP-N-acetyl-beta-neuraminate = a 3-O-[N-acetyl-alpha-neuraminosyl-(2-&gt;6)-N-acetyl-alpha-D-galactosaminyl]-L-threonyl-[protein] + CMP + H(+). It catalyses the reaction a 3-O-[N-acetyl-alpha-neuraminyl-(2-&gt;3)-beta-D-galactosyl-(1-&gt;3)-N-acetyl-alpha-D-galactosaminyl]-L-threonyl-[protein] + CMP-N-acetyl-beta-neuraminate = a 3-O-{alpha-Neu5Ac-(2-&gt;3)-beta-D-Gal-(1-&gt;3)-[alpha-Neu5Ac-(2-&gt;6)]-alpha-D-GalNAc}-L-threonyl-[protein] + CMP + H(+). It participates in protein modification; protein glycosylation. Functionally, catalyzes the transfer of N-acetylneuraminyl groups onto glycan chains in glycoproteins. Conjugates sialic acid with an alpha-2-6 linkage to N-acetylgalactosamine (GalNAc) glycan chains linked to serine or threonine in glycoproteins. Sialylates alphaGalNAc- and Galbeta1-&gt;3GalNAc-O-Ser/Thr epitopes also known as Tn and T antigens. The polypeptide is Alpha-N-acetylgalactosaminide alpha-2,6-sialyltransferase 2 (St6galnac2) (Mus musculus (Mouse)).